Here is a 132-residue protein sequence, read N- to C-terminus: MSSREFRYRGYTLEQLQTMTLDELANVMPSRIRRTLKRGLSIENKKLLDKIRKYKAMGIDKVIRTHRRDMPILPEMVGSKIAVHNGKEFVEITIVPEMIGHYLGEFAMTNRIVRHGKPGKGATRSSKFVPLK.

This sequence belongs to the universal ribosomal protein uS19 family.

Its function is as follows. Protein S19 forms a complex with S13 that binds strongly to the 16S ribosomal RNA. This is Small ribosomal subunit protein uS19 from Korarchaeum cryptofilum (strain OPF8).